Here is a 154-residue protein sequence, read N- to C-terminus: Urease accessory protein UreE (154 aa).

A disordered region spans residues 135–154 (PENGAYHGTGGHHHHHHDHE). A compositionally biased stretch (basic residues) spans 144–154 (GGHHHHHHDHE).

The protein belongs to the UreE family.

It localises to the cytoplasm. Involved in urease metallocenter assembly. Binds nickel. Probably functions as a nickel donor during metallocenter assembly. In Teredinibacter turnerae (strain ATCC 39867 / T7901), this protein is Urease accessory protein UreE.